The primary structure comprises 454 residues: Chromosomal replication initiator protein DnaA (454 aa).

A domain I, interacts with DnaA modulators region spans residues Met-1 to Lys-76. Positions Lys-76–Lys-113 are domain II. Positions Gly-114–Ala-330 are domain III, AAA+ region. ATP is bound by residues Gly-158, Gly-160, Lys-161, and Thr-162. Residues Ser-331 to Gln-454 form a domain IV, binds dsDNA region.

This sequence belongs to the DnaA family. In terms of assembly, oligomerizes as a right-handed, spiral filament on DNA at oriC.

Its subcellular location is the cytoplasm. In terms of biological role, plays an essential role in the initiation and regulation of chromosomal replication. ATP-DnaA binds to the origin of replication (oriC) to initiate formation of the DNA replication initiation complex once per cell cycle. Binds the DnaA box (a 9 base pair repeat at the origin) and separates the double-stranded (ds)DNA. Forms a right-handed helical filament on oriC DNA; dsDNA binds to the exterior of the filament while single-stranded (ss)DNA is stabiized in the filament's interior. The ATP-DnaA-oriC complex binds and stabilizes one strand of the AT-rich DNA unwinding element (DUE), permitting loading of DNA polymerase. After initiation quickly degrades to an ADP-DnaA complex that is not apt for DNA replication. Binds acidic phospholipids. This chain is Chromosomal replication initiator protein DnaA, found in Methylacidiphilum infernorum (isolate V4) (Methylokorus infernorum (strain V4)).